Reading from the N-terminus, the 180-residue chain is Virion protein US10 homolog (180 aa).

Belongs to the herpesviridae US10 family. Phosphorylated.

Its subcellular location is the virion tegument. The protein resides in the host nucleus matrix. This is Virion protein US10 homolog (64) from Varicella-zoster virus (strain Dumas) (HHV-3).